Here is an 839-residue protein sequence, read N- to C-terminus: Conserved oligomeric Golgi complex subunit 6 (839 aa).

A disordered region spans residues 14 to 38; the sequence is DTATPELPEPEPRLNLTSDAQSQPT.

This sequence belongs to the COG6 family. Component of the conserved oligomeric Golgi (COG or Sec34/Sec35) complex which consists of eight different proteins COG1-COG8.

The protein localises to the golgi apparatus membrane. Its function is as follows. Acts as a component of the peripheral membrane COG complex that is involved in intra-Golgi protein trafficking. COG is located at the cis-Golgi, and regulates tethering of retrograde intra-Golgi vesicles and possibly a number of other membrane trafficking events. The chain is Conserved oligomeric Golgi complex subunit 6 (COG6) from Saccharomyces cerevisiae (strain ATCC 204508 / S288c) (Baker's yeast).